The following is a 137-amino-acid chain: Small ribosomal subunit protein bS6 (137 aa).

The disordered stretch occupies residues 96–137 (VTEQSIMLKQKEERAERAPRRDDREERAPRREEEAKPEAAAE). Basic and acidic residues predominate over residues 104 to 137 (KQKEERAERAPRRDDREERAPRREEEAKPEAAAE).

It belongs to the bacterial ribosomal protein bS6 family.

Its function is as follows. Binds together with bS18 to 16S ribosomal RNA. This Vibrio atlanticus (strain LGP32) (Vibrio splendidus (strain Mel32)) protein is Small ribosomal subunit protein bS6.